The following is a 553-amino-acid chain: Arginine--tRNA ligase (553 aa).

A 'HIGH' region motif is present at residues 132 to 140 (PTGDLHIGH).

Belongs to the class-I aminoacyl-tRNA synthetase family. As to quaternary structure, monomer.

Its subcellular location is the cytoplasm. The enzyme catalyses tRNA(Arg) + L-arginine + ATP = L-arginyl-tRNA(Arg) + AMP + diphosphate. The chain is Arginine--tRNA ligase from Staphylococcus aureus (strain N315).